The following is an 85-amino-acid chain: uncharacterized protein (85 aa).

This is an uncharacterized protein from Escherichia coli (strain K12).